A 615-amino-acid chain; its full sequence is Melanopsin-B (615 aa).

Residues 1–19 (MDMDRGFYRKVDVPDHAHY) are Extracellular-facing. The chain crosses the membrane as a helical span at residues 20 to 40 (VIAFFVLIIGVVGVTGNALVM). Residues 41–56 (YAFLCNKKLRTPPNYF) are Cytoplasmic-facing. A helical transmembrane segment spans residues 57 to 77 (IMNLAVSDFLMAITQSPIFFI). Residues 78–93 (NSLFKEWIFGETGCRM) are Extracellular-facing. A disulfide bridge links Cys91 with Cys169. A helical membrane pass occupies residues 94–114 (YAFCGALFGITSMINLLAISL). Residues 115 to 136 (DRYIVITKPPQAIRWVSGRRTM) are Cytoplasmic-facing. The helical transmembrane segment at 137–157 (VVILLVWLYSLAWSLAPLLGW) threads the bilayer. Residues 158-189 (SSYIPEGLMTSCTWDYVTSTPANKGYTLMLCC) are Extracellular-facing. The chain crosses the membrane as a helical span at residues 190–210 (FVFFIPLGIISYCYLCMFLAI). The Cytoplasmic portion of the chain corresponds to 211 to 244 (RSAGREIERLGTQVRKSTLMQQQTIKTEWKLTKV). A helical transmembrane segment spans residues 245–265 (AFVVIIVYVHSWSPYACVTLI). The Extracellular segment spans residues 266 to 279 (AWAGYGSHLSPYSK). The chain crosses the membrane as a helical span at residues 280 to 300 (AVPAVIAKASAIYNPFIYAII). Lys287 is subject to N6-(retinylidene)lysine. At 301–615 (HSKYRDTLAE…RNLEESFMAL (315 aa)) the chain is on the cytoplasmic side. Disordered stretches follow at residues 390 to 420 (LGRSKEHRGPPAQQNRQTRSSDTLEQATVAD) and 465 to 502 (NKHPNNNHKNHNNRHNGNNNNEEHEYSGKGGRHCQNHP). Polar residues predominate over residues 401–415 (AQQNRQTRSSDTLEQ). Basic residues predominate over residues 469 to 478 (NNNHKNHNNR).

The protein belongs to the G-protein coupled receptor 1 family. Opsin subfamily. Expressed in the inner nuclear layer of the retina, possibly in amacrine and ganglion cells. Expressed in a subpopulation of neurons in the dorsal habenula.

It localises to the cell membrane. In terms of biological role, photoreceptor implicated in non-image-forming responses to light. The protein is Melanopsin-B (opn4b) of Gadus morhua (Atlantic cod).